The following is a 380-amino-acid chain: Cytochrome b (380 aa).

4 consecutive transmembrane segments (helical) span residues 33–53 (FGSL…FLAM), 77–98 (WLIR…YMHI), 113–133 (WNIG…GYVL), and 178–198 (FFAF…LHLL). The heme b site is built by histidine 83 and histidine 97. Residues histidine 182 and histidine 196 each contribute to the heme b site. Residue histidine 201 participates in a ubiquinone binding. Transmembrane regions (helical) follow at residues 226–246 (YKDL…ALFA), 288–308 (LGGV…PILH), 320–340 (LTQF…WIGG), and 347–367 (FIII…VLAP).

Belongs to the cytochrome b family. The cytochrome bc1 complex contains 3 respiratory subunits (MT-CYB, CYC1 and UQCRFS1), 2 core proteins (UQCRC1 and UQCRC2) and probably 6 low-molecular weight proteins. It depends on heme b as a cofactor.

Its subcellular location is the mitochondrion inner membrane. Component of the ubiquinol-cytochrome c reductase complex (complex III or cytochrome b-c1 complex) that is part of the mitochondrial respiratory chain. The b-c1 complex mediates electron transfer from ubiquinol to cytochrome c. Contributes to the generation of a proton gradient across the mitochondrial membrane that is then used for ATP synthesis. This chain is Cytochrome b (mt-cyb), found in Salmo trutta (Brown trout).